We begin with the raw amino-acid sequence, 299 residues long: Cysteine synthase B (299 aa).

Position 45 is an N6-(pyridoxal phosphate)lysine (K45). Pyridoxal 5'-phosphate is bound by residues N75, G178–T182, and S259.

This sequence belongs to the cysteine synthase/cystathionine beta-synthase family. Requires pyridoxal 5'-phosphate as cofactor.

The catalysed reaction is O-acetyl-L-serine + hydrogen sulfide = L-cysteine + acetate. It participates in amino-acid biosynthesis; L-cysteine biosynthesis; L-cysteine from L-serine: step 2/2. This Pseudomonas aeruginosa (strain ATCC 15692 / DSM 22644 / CIP 104116 / JCM 14847 / LMG 12228 / 1C / PRS 101 / PAO1) protein is Cysteine synthase B (cysM).